A 62-amino-acid chain; its full sequence is uncharacterized protein (62 aa).

Positions 26–62 (YELATLYEAMQKENEEQIEQSKNKLERLRKEWIRLNG) form a coiled coil.

This is an uncharacterized protein from Bacillus subtilis (strain 168).